A 272-amino-acid polypeptide reads, in one-letter code: NH(3)-dependent NAD(+) synthetase (272 aa).

Position 45–52 (45–52 (GISGGQDS)) interacts with ATP. Residue aspartate 51 participates in Mg(2+) binding. Arginine 138 is a binding site for deamido-NAD(+). Threonine 158 is a binding site for ATP. Glutamate 163 contacts Mg(2+). Residues lysine 171 and aspartate 178 each contribute to the deamido-NAD(+) site. 2 residues coordinate ATP: lysine 187 and threonine 209. Residue 258–259 (HK) coordinates deamido-NAD(+).

This sequence belongs to the NAD synthetase family. Homodimer.

The enzyme catalyses deamido-NAD(+) + NH4(+) + ATP = AMP + diphosphate + NAD(+) + H(+). The protein operates within cofactor biosynthesis; NAD(+) biosynthesis; NAD(+) from deamido-NAD(+) (ammonia route): step 1/1. In terms of biological role, catalyzes the ATP-dependent amidation of deamido-NAD to form NAD. Uses ammonia as a nitrogen source. This chain is NH(3)-dependent NAD(+) synthetase, found in Bacillus velezensis (strain DSM 23117 / BGSC 10A6 / LMG 26770 / FZB42) (Bacillus amyloliquefaciens subsp. plantarum).